We begin with the raw amino-acid sequence, 194 residues long: Large ribosomal subunit protein eL15 (194 aa).

Positions 165–194 (AGKKGRGLMNKGKGAEKVRPGIRANKKLGK) are disordered.

Belongs to the eukaryotic ribosomal protein eL15 family.

The sequence is that of Large ribosomal subunit protein eL15 from Methanococcus aeolicus (strain ATCC BAA-1280 / DSM 17508 / OCM 812 / Nankai-3).